Reading from the N-terminus, the 246-residue chain is Putative pectinesterase 57 (246 aa).

N-linked (GlcNAc...) asparagine glycans are attached at residues Asn-127 and Asn-143. Thr-152 lines the substrate pocket. Asn-174 carries an N-linked (GlcNAc...) asparagine glycan. Residue Asp-205 is the Proton donor of the active site. Asp-226 functions as the Nucleophile in the catalytic mechanism.

The protein belongs to the pectinesterase family.

The enzyme catalyses [(1-&gt;4)-alpha-D-galacturonosyl methyl ester](n) + n H2O = [(1-&gt;4)-alpha-D-galacturonosyl](n) + n methanol + n H(+). It functions in the pathway glycan metabolism; pectin degradation; 2-dehydro-3-deoxy-D-gluconate from pectin: step 1/5. In terms of biological role, acts in the modification of cell walls via demethylesterification of cell wall pectin. The polypeptide is Putative pectinesterase 57 (PME57) (Arabidopsis thaliana (Mouse-ear cress)).